Here is a 756-residue protein sequence, read N- to C-terminus: Centromere protein I (756 aa).

The tract at residues 1–60 (MSPQKRVKNVQAQNRTSQGSSSFQTTLSAWKVKQDPSNSKNISKHGQNNPVGDYEHADDQ) is disordered. 2 stretches are compositionally biased toward polar residues: residues 10-28 (VQAQNRTSQGSSSFQTTLS) and 35-50 (DPSNSKNISKHGQNNP).

The protein belongs to the CENP-I/CTF3 family. Component of the CENPA-CAD complex, composed of CENPI, CENPK, CENPL, CENPO, CENPP, CENPQ, CENPR and CENPS. The CENPA-CAD complex interacts with the CENPA-NAC complex, at least composed of CENPA, CENPC, CENPH, CENPM, CENPN, CENPT and CENPU. Interacts with SENP6. Sumoylated. Sumoylated form can be polyubiquitinated by RNF4, leading to its degradation. Desumoylation by SENP6 prevents its degradation.

The protein localises to the nucleus. The protein resides in the chromosome. It localises to the centromere. Functionally, component of the CENPA-CAD (nucleosome distal) complex, a complex recruited to centromeres which is involved in assembly of kinetochore proteins, mitotic progression and chromosome segregation. May be involved in incorporation of newly synthesized CENPA into centromeres via its interaction with the CENPA-NAC complex. Required for the localization of CENPF, MAD1L1 and MAD2 (MAD2L1 or MAD2L2) to kinetochores. Involved in the response of gonadal tissues to follicle-stimulating hormone. This is Centromere protein I (CENPI) from Homo sapiens (Human).